Consider the following 418-residue polypeptide: Nuclear receptor coactivator 6 (418 aa).

2 disordered regions span residues 1-21 and 77-98; these read EQIM…QNQS and PPGP…ANND. Positions 1-215 are TBP/GTF2A-binding region; the sequence is EQIMTNQMQG…PPRKKKNCHQ (215 aa). The CREBBP-binding region stretch occupies residues 1–352; that stretch reads EQIMTNQMQG…LPVSQNVHPP (352 aa). The NCOA1-binding region stretch occupies residues 1-418; it reads EQIMTNQMQG…YQESPQNSSS (418 aa). The segment at 60–214 is NCOA6IP-binding region; sequence VSNSPSQVMG…KPPRKKKNCH (155 aa). Positions 84 to 98 are enriched in polar residues; sequence MAQQHTDPATTANND. S171 bears the Phosphoserine mark. Residues 174–178 carry the LXXLL motif motif; sequence LVNLL. Residues 186 to 418 are disordered; sequence HFGVNNKQNN…YQESPQNSSS (233 aa). The segment covering 190-199 has biased composition (low complexity); that stretch reads NNKQNNTNAN. A compositionally biased stretch (basic residues) spans 200 to 212; sequence KQKKKKPPRKKKN. Positions 269 to 279 are enriched in low complexity; it reads PLQQMPPQLMQ. Residues 282 to 310 show a composition bias toward pro residues; it reads APPPQPPQQQPQPQLPQQQPQPQPPPPSQ. The segment covering 311–336 has biased composition (low complexity); that stretch reads PQSQQQQQQQQQQQQQQMMMMLMMQQ. Asymmetric dimethylarginine is present on residues R342 and R353. Positions 358 to 370 are enriched in polar residues; the sequence is PDSQRVPMQQSGN. An Asymmetric dimethylarginine modification is found at R391. Polar residues predominate over residues 399–418; that stretch reads PLGSNSRKMVYQESPQNSSS.

Monomer and homodimer. Interacts in vitro with the basal transcription factors GTF2A and TBP, suggesting an autonomous transactivation function. Interacts with NCOA1, CRSP3, RBM14, the histone acetyltransferase proteins EP300 and CREBBP, and with methyltransferase proteins NCOA6IP and PRMT2. Component of the MLL2/3 complex (also named ASCOM complex), at least composed of KMT2D/MLL2 or KMT2C/MLL3, ASH2L, RBBP5, WDR5, NCOA6, DPY30, KDM6A, PAXIP1/PTIP, PAGR1 and alpha- and beta-tubulin. Interacts with ZNF335; may enhance ligand-dependent transcriptional activation by nuclear hormone receptors. In terms of processing, phosphorylated.

The protein localises to the nucleus. In terms of biological role, nuclear receptor coactivator that directly binds nuclear receptors and stimulates the transcriptional activities in a hormone-dependent fashion. Coactivate expression in an agonist- and AF2-dependent manner. May coactivate expression via a remodeling of chromatin and its interaction with histone acetyltransferase proteins. Involved in the coactivation of different nuclear receptors, such as for steroids (GR and ERs), retinoids (RARs and RXRs), thyroid hormone (TRs), vitamin D3 (VDR) and prostanoids (PPARs). Probably functions as a general coactivator, rather than just a nuclear receptor coactivator. May also be involved in the coactivation of the NF-kappa-B pathway. The sequence is that of Nuclear receptor coactivator 6 (Ncoa6) from Rattus norvegicus (Rat).